A 209-amino-acid chain; its full sequence is Ribosomal RNA large subunit methyltransferase E (209 aa).

S-adenosyl-L-methionine is bound by residues Gly-63, Trp-65, Asp-83, Asp-99, and Asp-124. Lys-164 acts as the Proton acceptor in catalysis.

It belongs to the class I-like SAM-binding methyltransferase superfamily. RNA methyltransferase RlmE family.

Its subcellular location is the cytoplasm. The catalysed reaction is uridine(2552) in 23S rRNA + S-adenosyl-L-methionine = 2'-O-methyluridine(2552) in 23S rRNA + S-adenosyl-L-homocysteine + H(+). Specifically methylates the uridine in position 2552 of 23S rRNA at the 2'-O position of the ribose in the fully assembled 50S ribosomal subunit. This chain is Ribosomal RNA large subunit methyltransferase E, found in Vibrio parahaemolyticus serotype O3:K6 (strain RIMD 2210633).